We begin with the raw amino-acid sequence, 150 residues long: Large ribosomal subunit protein bL9 (150 aa).

Belongs to the bacterial ribosomal protein bL9 family.

Its function is as follows. Binds to the 23S rRNA. In Shewanella denitrificans (strain OS217 / ATCC BAA-1090 / DSM 15013), this protein is Large ribosomal subunit protein bL9.